A 131-amino-acid polypeptide reads, in one-letter code: Putative pre-16S rRNA nuclease (131 aa).

The protein belongs to the YqgF nuclease family.

It localises to the cytoplasm. In terms of biological role, could be a nuclease involved in processing of the 5'-end of pre-16S rRNA. This is Putative pre-16S rRNA nuclease from Bordetella petrii (strain ATCC BAA-461 / DSM 12804 / CCUG 43448).